The following is a 521-amino-acid chain: Phosphoethanolamine transferase EptA (521 aa).

Transmembrane regions (helical) follow at residues 18-38, 47-67, 79-99, 118-138, 150-170, and 182-202; these read AGLL…FVYV, FIAM…LALG, IVFS…KVFL, FLSV…GYVI, APFL…LANT, and FIGG…VSAL.

This sequence belongs to the phosphoethanolamine transferase family. EptA subfamily.

The protein localises to the cell inner membrane. Its pathway is bacterial outer membrane biogenesis; LPS lipid A biosynthesis. Its function is as follows. Probably catalyzes the addition of a phosphoethanolamine moiety to the dephosphorylated 1-position of the disaccharide backbone of lipid A. Lipid A that is 1-phosphorylated is not a substrate for this enzyme. The sequence is that of Phosphoethanolamine transferase EptA from Helicobacter pylori (strain ATCC 700392 / 26695) (Campylobacter pylori).